The primary structure comprises 755 residues: DNA ligase 1 (755 aa).

The transit peptide at 1 to 44 (MRRLLTGCLLSSARPLKSRLPLLMSSSLPSSAGKKPKQATLARF) directs the protein to the mitochondrion. Arginine 2 carries the N-acetylserine modification. Residues 47-60 (SMKNKPTEGTPSPK) are compositionally biased toward polar residues. Disordered regions lie at residues 47–79 (SMKN…GEEE) and 97–127 (PSSM…QRLV). A phosphoserine mark is found at serine 58 and serine 75. Positions 102 to 114 (SNFSSIPSSAPSS) are enriched in low complexity. Serine 119 and serine 123 each carry phosphoserine. Residues 309–318 (KLRIGLAEKT) are interaction with target DNA. Glutamate 417 is an ATP binding site. The N6-AMP-lysine intermediate role is filled by lysine 419. Residues arginine 424 and arginine 440 each contribute to the ATP site. Glutamate 472 provides a ligand contact to Mg(2+). The interaction with target DNA stretch occupies residues 493–495 (KRK). Glutamate 571 lines the Mg(2+) pocket. The ATP site is built by lysine 576, arginine 590, and lysine 596.

The protein belongs to the ATP-dependent DNA ligase family. It depends on Mg(2+) as a cofactor.

Its subcellular location is the mitochondrion. The protein resides in the nucleus. It carries out the reaction ATP + (deoxyribonucleotide)n-3'-hydroxyl + 5'-phospho-(deoxyribonucleotide)m = (deoxyribonucleotide)n+m + AMP + diphosphate.. In terms of biological role, DNA ligase that seals nicks in double-stranded DNA during DNA replication, DNA recombination and DNA repair. The mitochondrial form is required for mitochondrial DNA maintenance but is non-essential while the nuclear form is essential for cell viability. The protein is DNA ligase 1 (CDC9) of Saccharomyces cerevisiae (strain ATCC 204508 / S288c) (Baker's yeast).